We begin with the raw amino-acid sequence, 361 residues long: Queuine tRNA-ribosyltransferase (361 aa).

Aspartate 92 (proton acceptor) is an active-site residue. Residues 92–96 (DSGGF), aspartate 146, glutamine 189, and glycine 216 contribute to the substrate site. Positions 247 to 253 (GVGKPVD) are RNA binding. Aspartate 266 acts as the Nucleophile in catalysis. Positions 271-275 (TRSGR) are RNA binding; important for wobble base 34 recognition. Residues cysteine 304, cysteine 306, cysteine 309, and histidine 335 each coordinate Zn(2+).

This sequence belongs to the queuine tRNA-ribosyltransferase family. As to quaternary structure, homodimer. Within each dimer, one monomer is responsible for RNA recognition and catalysis, while the other monomer binds to the replacement base PreQ1. It depends on Zn(2+) as a cofactor.

It carries out the reaction 7-aminomethyl-7-carbaguanine + guanosine(34) in tRNA = 7-aminomethyl-7-carbaguanosine(34) in tRNA + guanine. Its pathway is tRNA modification; tRNA-queuosine biosynthesis. In terms of biological role, catalyzes the base-exchange of a guanine (G) residue with the queuine precursor 7-aminomethyl-7-deazaguanine (PreQ1) at position 34 (anticodon wobble position) in tRNAs with GU(N) anticodons (tRNA-Asp, -Asn, -His and -Tyr). Catalysis occurs through a double-displacement mechanism. The nucleophile active site attacks the C1' of nucleotide 34 to detach the guanine base from the RNA, forming a covalent enzyme-RNA intermediate. The proton acceptor active site deprotonates the incoming PreQ1, allowing a nucleophilic attack on the C1' of the ribose to form the product. After dissociation, two additional enzymatic reactions on the tRNA convert PreQ1 to queuine (Q), resulting in the hypermodified nucleoside queuosine (7-(((4,5-cis-dihydroxy-2-cyclopenten-1-yl)amino)methyl)-7-deazaguanosine). The protein is Queuine tRNA-ribosyltransferase of Rickettsia africae (strain ESF-5).